A 336-amino-acid polypeptide reads, in one-letter code: Dihydroorotate dehydrogenase (quinone) (336 aa).

Residues 62 to 66 and Thr-86 each bind FMN; that span reads AGLDK. Lys-66 contacts substrate. Substrate is bound at residue 111–115; it reads NRMGF. FMN is bound by residues Asn-139 and Asn-172. Asn-172 is a binding site for substrate. The Nucleophile role is filled by Ser-175. Asn-177 contributes to the substrate binding site. FMN contacts are provided by Lys-217 and Thr-245. A substrate-binding site is contributed by 246 to 247; it reads NT. Residues Gly-268, Gly-297, and 318 to 319 each bind FMN; that span reads YS.

It belongs to the dihydroorotate dehydrogenase family. Type 2 subfamily. Monomer. It depends on FMN as a cofactor.

Its subcellular location is the cell membrane. It carries out the reaction (S)-dihydroorotate + a quinone = orotate + a quinol. It functions in the pathway pyrimidine metabolism; UMP biosynthesis via de novo pathway; orotate from (S)-dihydroorotate (quinone route): step 1/1. In terms of biological role, catalyzes the conversion of dihydroorotate to orotate with quinone as electron acceptor. This Sodalis glossinidius (strain morsitans) protein is Dihydroorotate dehydrogenase (quinone).